Consider the following 196-residue polypeptide: Chaperone protein TorD (196 aa).

It belongs to the TorD/DmsD family. TorD subfamily.

Its subcellular location is the cytoplasm. Its function is as follows. Involved in the biogenesis of TorA. Acts on TorA before the insertion of the molybdenum cofactor and, as a result, probably favors a conformation of the apoenzyme that is competent for acquiring the cofactor. In Pasteurella multocida (strain Pm70), this protein is Chaperone protein TorD.